A 346-amino-acid chain; its full sequence is Putative aminopeptidase YhfE (346 aa).

Residues His68 and Asp185 each coordinate a divalent metal cation. Glu219 functions as the Proton acceptor in the catalytic mechanism. Positions 220, 240, and 320 each coordinate a divalent metal cation.

It belongs to the peptidase M42 family. It depends on a divalent metal cation as a cofactor.

The protein is Putative aminopeptidase YhfE (yhfE) of Bacillus subtilis (strain 168).